A 343-amino-acid chain; its full sequence is Glyceraldehyde-3-phosphate dehydrogenase (343 aa).

NAD(+)-binding positions include 13–14 (TI) and glycine 111. 140-142 (SCN) contacts D-glyceraldehyde 3-phosphate. Cysteine 141 serves as the catalytic Nucleophile. Arginine 169 serves as a coordination point for NAD(+). Position 195 to 196 (195 to 196 (HA)) interacts with D-glyceraldehyde 3-phosphate. Position 303 (glutamine 303) interacts with NAD(+).

This sequence belongs to the glyceraldehyde-3-phosphate dehydrogenase family. In terms of assembly, homotetramer.

The protein resides in the cytoplasm. The enzyme catalyses D-glyceraldehyde 3-phosphate + phosphate + NADP(+) = (2R)-3-phospho-glyceroyl phosphate + NADPH + H(+). The catalysed reaction is D-glyceraldehyde 3-phosphate + phosphate + NAD(+) = (2R)-3-phospho-glyceroyl phosphate + NADH + H(+). Its pathway is carbohydrate degradation; glycolysis; pyruvate from D-glyceraldehyde 3-phosphate: step 1/5. This is Glyceraldehyde-3-phosphate dehydrogenase from Sulfurisphaera tokodaii (strain DSM 16993 / JCM 10545 / NBRC 100140 / 7) (Sulfolobus tokodaii).